A 718-amino-acid polypeptide reads, in one-letter code: MAARAQIKLLPEMFQSNGCASLEDTKSTVSKVQTRTERFQERVRKHIDENYSEFMTNHTSPDIFLEESSSLGREINDLLETVGTEGLAALNGSSTQLADHSRELRELMLGLQVSEHILKIDELFQCVEEAKGTKDYLVVLDLVGRLRSLIYGEGEAATQDVVRIFQALECYETIKVKYHVQAHLLQQNMQERFDRLVQLNCKSFPNSKCVTLLVSKEEGQLHDIVIALFQERYNPVRLCEFLLENCIEPLILKPVGVECNENAEAGTYVQLSLSYSTKESGTASGTSTQLRPNYKQVLEHFRLLLQTLSGINHSLSSSQHVFSIIGDHVKDRMMHLLVNDCLIPAVPETMEEYQASTLCEDVAHFEQYLADSFLINPEVDRGLSQFIEQYGTYYRNRLCSRVLESTREIIQRDLQDMVLVAPNNQAMDVTGCDPFLFPRCMVSRSAQDFMKLMERILRQPTEKPGEDEADPLAGVIGMMLQTYIDEVPKVHKKLLESIPQQSVLFHNNCMYFTHWVAQNANKGIESFPALVKTLQATGTMHFRVQVTYQTSILMDIMESFEFESPHTLGTGPLKLVRQCLRQLELLKNVWQNVLPDNVYNSTFVELLHAFINELVRHIFTQRDISATMASDLSDLIDVVLEKAPKLFRDPHEVHQVRSWMKLQQLKTMMNASLKEITELWCKGAGPLTANYKADEIRYLIRALFQDTDRRAKAITQIM.

The protein belongs to the ZW10 family.

The protein resides in the cytoplasm. It localises to the nucleus. It is found in the chromosome. The protein localises to the centromere. Its subcellular location is the kinetochore. Required for accurate chromosome segregation. This is Centromere/kinetochore protein zw10 (mit(1)15) from Drosophila pseudoobscura pseudoobscura (Fruit fly).